Consider the following 39-residue polypeptide: Mu-theraphotoxin-Ae1a (39 aa).

Cystine bridges form between C7-C21, C14-C26, and C20-C33. The residue at position 39 (F39) is a Phenylalanine amide.

The protein belongs to the neurotoxin 10 (Hwtx-1) family. 47 subfamily. In terms of tissue distribution, expressed by the venom gland.

The protein resides in the secreted. Insecticidal toxin that acts, at least partially, by inhibiting insect voltage-gated sodium (NaV) channels of several insect species. The toxin binds to the voltage sensor in NaV channel domain II and inhibits channel opening by shifting the threshold for channel activation to more positive voltages. The toxin binding is sensitive to residues in the S1-S2 loop of the domain II voltage sensor. In vivo, the recombinant toxin causes paralysis and/or death to two dipteran species (Lucilia cuprina and Drosophila melanogaster). In contrast, the toxin does not show paralytic or lethal effect on the cotton bollworm Helicoverpa armigera and the triatomine bug Rhodinius prolixus. This chain is Mu-theraphotoxin-Ae1a, found in Augacephalus ezendami (Mozambique baboon spider).